Here is a 413-residue protein sequence, read N- to C-terminus: N-acylneuraminate cytidylyltransferase (413 aa).

It belongs to the CMP-NeuNAc synthase family. The cofactor is Mg(2+). Mn(2+) is required as a cofactor.

It localises to the cytoplasm. It catalyses the reaction an N-acylneuraminate + CTP = a CMP-N-acyl-beta-neuraminate + diphosphate. Its function is as follows. Catalyzes the formation of CMP-N-acetylneuraminic acid (CMP-NeuNAc), which is essential for the formation of the capsule. The sequence is that of N-acylneuraminate cytidylyltransferase (neuA) from Streptococcus agalactiae serotype V (strain ATCC BAA-611 / 2603 V/R).